The following is a 1401-amino-acid chain: DNA-directed RNA polymerase subunit beta' (1401 aa).

4 residues coordinate Zn(2+): Cys-70, Cys-72, Cys-85, and Cys-88. Asp-460, Asp-462, and Asp-464 together coordinate Mg(2+). Zn(2+) contacts are provided by Cys-808, Cys-882, Cys-889, and Cys-892.

Belongs to the RNA polymerase beta' chain family. The RNAP catalytic core consists of 2 alpha, 1 beta, 1 beta' and 1 omega subunit. When a sigma factor is associated with the core the holoenzyme is formed, which can initiate transcription. Requires Mg(2+) as cofactor. It depends on Zn(2+) as a cofactor.

It catalyses the reaction RNA(n) + a ribonucleoside 5'-triphosphate = RNA(n+1) + diphosphate. In terms of biological role, DNA-dependent RNA polymerase catalyzes the transcription of DNA into RNA using the four ribonucleoside triphosphates as substrates. This is DNA-directed RNA polymerase subunit beta' from Legionella pneumophila (strain Paris).